Here is a 353-residue protein sequence, read N- to C-terminus: Photosystem II D2 protein (353 aa).

An N-acetylthreonine modification is found at T2. The residue at position 2 (T2) is a Phosphothreonine. A helical transmembrane segment spans residues 41–61; sequence CAYFALGGWFTGTTFVTSWYT. H118 serves as a coordination point for chlorophyll a. The helical transmembrane segment at 125–141 threads the bilayer; it reads GFMLRQFELARSVQLRP. Pheophytin a contacts are provided by Q130 and N143. A helical membrane pass occupies residues 153-166; it reads VFVSVFLIYPLGQS. H198 provides a ligand contact to chlorophyll a. Residues 208-228 traverse the membrane as a helical segment; that stretch reads AALLCAIHGATVENTLFEDGD. Residues H215 and F262 each contribute to the a plastoquinone site. H215 provides a ligand contact to Fe cation. A Fe cation-binding site is contributed by H269. Residues 279–295 traverse the membrane as a helical segment; sequence GLWMSALGVVGLALNLR.

The protein belongs to the reaction center PufL/M/PsbA/D family. In terms of assembly, PSII is composed of 1 copy each of membrane proteins PsbA, PsbB, PsbC, PsbD, PsbE, PsbF, PsbH, PsbI, PsbJ, PsbK, PsbL, PsbM, PsbT, PsbX, PsbY, PsbZ, Psb30/Ycf12, at least 3 peripheral proteins of the oxygen-evolving complex and a large number of cofactors. It forms dimeric complexes. The D1/D2 heterodimer binds P680, chlorophylls that are the primary electron donor of PSII, and subsequent electron acceptors. It shares a non-heme iron and each subunit binds pheophytin, quinone, additional chlorophylls, carotenoids and lipids. There is also a Cl(-1) ion associated with D1 and D2, which is required for oxygen evolution. The PSII complex binds additional chlorophylls, carotenoids and specific lipids. serves as cofactor.

It is found in the plastid. The protein resides in the chloroplast thylakoid membrane. The catalysed reaction is 2 a plastoquinone + 4 hnu + 2 H2O = 2 a plastoquinol + O2. Functionally, photosystem II (PSII) is a light-driven water:plastoquinone oxidoreductase that uses light energy to abstract electrons from H(2)O, generating O(2) and a proton gradient subsequently used for ATP formation. It consists of a core antenna complex that captures photons, and an electron transfer chain that converts photonic excitation into a charge separation. The D1/D2 (PsbA/PsbD) reaction center heterodimer binds P680, the primary electron donor of PSII as well as several subsequent electron acceptors. D2 is needed for assembly of a stable PSII complex. The protein is Photosystem II D2 protein of Ranunculus macranthus (Large buttercup).